The chain runs to 603 residues: Pyruvate decarboxylase 4 (603 aa).

Residues D65 and H152 each coordinate substrate. The segment at 430 to 512 (DSWFNCQKLK…FLINNGGYTI (83 aa)) is thiamine pyrophosphate binding. D480, N507, and G509 together coordinate Mg(2+). E513 serves as a coordination point for substrate.

This sequence belongs to the TPP enzyme family. As to quaternary structure, homotetramer. A metal cation is required as a cofactor. Requires thiamine diphosphate as cofactor. As to expression, expressed in shoots and at lowe levels in roots, flowers and siliques.

It catalyses the reaction a 2-oxocarboxylate + H(+) = an aldehyde + CO2. The polypeptide is Pyruvate decarboxylase 4 (PDC4) (Arabidopsis thaliana (Mouse-ear cress)).